Reading from the N-terminus, the 782-residue chain is MNPEKDFAPLTPNIVRALNDKLYEKRKVAALEIEKLVREFVAQNNTVQIKHVIQTLSQEFALSQHPHSRKGGLIGLAACSIALGKDSGLYLKELIEPVLTCFNDADSRLRYYACEALYNIVKVARGAVLPHFNVLFDGLSKLAADPDPNVKSGSELLDRLLKDIVTESNKFDLVSFIPLLRERIYSNNQYARQFIISWILVLESVPDINLLDYLPEILDGLFQILGDNGKEIRKMCEVVLGEFLKEIKKNPSSVKFAEMANILVIHCQTTDDLIQLTAMCWMREFIQLAGRVMLPYSSGILTAVLPCLAYDDRKKSIKEVANVCNQSLMKLVTPEDDELDELRPGQRQAEPTPDDALPKQEGTASGGPDGSCDSSFSSGISVFTAASTERAPVTLHLDGIVQVLNCHLSDTAIGMMTRIAVLKWLYHLYIKTPRKMFRHTDSLFPILLQTLSDESDEVILKDLEVLAEIASSPAGQTDDPGPLDGPDLQASHSELQVPTPGRAGLLNTSGTKGLECSPSTPTMNSYFYKFMINLLKRFSSERKLLEVRGPFIIRQLCLLLNAENIFHSMADILLREEDLKFASTMVHALNTILLTSTELFQLRNQLKDLKTLESQNLFCCLYRSWCHNPVTTVSLCFLTQNYRHAYDLIQKFGDLEVTVDFLAEVDKLVQLIECPIFTYLRLQLLDVKNNPYLIKALYGLLMLLPQSSAFQLLSHRLQCVPNPELLQTEDSLKAAPKSQKADSPSIDYAELLQHFEKVQNKHLEVRHQRSGRGDHLDRRVVL.

At Met1 the chain carries N-acetylmethionine. HEAT repeat units follow at residues 5–42 (KDFAPLTPNIVRALNDKLYEKRKVAALEIEKLVREFVA), 89–126 (LYLKELIEPVLTCFNDADSRLRYYACEALYNIVKVARG), 171–208 (FDLVSFIPLLRERIYSNNQYARQFIISWILVLESVPDI), and 212–249 (DYLPEILDGLFQILGDNGKEIRKMCEVVLGEFLKEIKK). Thr11 bears the Phosphothreonine mark. Disordered regions lie at residues 335-372 (EDDELDELRPGQRQAEPTPDDALPKQEGTASGGPDGSC) and 471-517 (SSPA…LECS). Residues 438–475 (RHTDSLFPILLQTLSDESDEVILKDLEVLAEIASSPAG) form an HEAT 5 repeat. Residues 478 to 488 (DDPGPLDGPDL) are compositionally biased toward low complexity. At Thr499 the chain carries Phosphothreonine. Positions 506-517 (LNTSGTKGLECS) are enriched in polar residues. Ser517 carries the phosphoserine modification. The HEAT 6 repeat unit spans residues 560–598 (LNAENIFHSMADILLREEDLKFASTMVHALNTILLTSTE). Residue Ser743 is modified to Phosphoserine. Residues 773 to 777 (GDHLD) form a mediates interaction with the PDZ domain of NOS1 region.

This sequence belongs to the VAC14 family. As to quaternary structure, forms pentamers. Component of the PI(3,5)P2 regulatory complex/PAS complex, at least composed of PIKFYVE, FIG4 and VAC14. VAC14 nucleates the assembly of the complex and serves as a scaffold by pentamerizing into a star-shaped structure, which can bind a single copy each of PIKFYVE and FIG4 and coordinates their activities. Interacts with NOS1. (Microbial infection) Interacts with HTLV-1 Tax. Ubiquitously expressed.

The protein localises to the endosome membrane. It localises to the microsome membrane. Scaffold protein component of the PI(3,5)P2 regulatory complex which regulates both the synthesis and turnover of phosphatidylinositol 3,5-bisphosphate (PtdIns(3,5)P2). Pentamerizes into a star-shaped structure and nucleates the assembly of the complex. The pentamer binds a single copy each of PIKFYVE and FIG4 and coordinates both PIKfyve kinase activity and FIG4 phosphatase activity, being required to maintain normal levels of phosphatidylinositol 3-phosphate (PtdIns(3)P) and phosphatidylinositol 5-phosphate (PtdIns(5)P). Plays a role in the biogenesis of endosome carrier vesicles (ECV) / multivesicular bodies (MVB) transport intermediates from early endosomes. The protein is Protein VAC14 homolog (VAC14) of Homo sapiens (Human).